The primary structure comprises 574 residues: Protein misato (574 aa).

Belongs to the misato family.

The protein localises to the mitochondrion. The polypeptide is Protein misato (mst) (Drosophila melanogaster (Fruit fly)).